The primary structure comprises 46 residues: Aspartate aminotransferase 1 (46 aa).

This sequence belongs to the class-I pyridoxal-phosphate-dependent aminotransferase family. Homodimer. It depends on pyridoxal 5'-phosphate as a cofactor.

It carries out the reaction L-aspartate + 2-oxoglutarate = oxaloacetate + L-glutamate. In terms of biological role, important for the metabolism of amino acids and Krebs-cycle related organic acids. In plants, it is involved in nitrogen metabolism and in aspects of carbon and energy metabolism. The sequence is that of Aspartate aminotransferase 1 from Pseudotsuga menziesii (Douglas-fir).